A 111-amino-acid chain; its full sequence is HTH-type transcriptional regulator SinR (111 aa).

The region spanning 6-61 is the HTH cro/C1-type domain; it reads IKQYRKEKGYSLSELAEKAGVAKSYLSSIERNLQTNPSIQFLEKVSAVLDVSVHTL. A DNA-binding region (H-T-H motif) is located at residues 17-36; it reads LSELAEKAGVAKSYLSSIER. One can recognise a Sin domain in the interval 65 to 103; that stretch reads KDETEYDGQLDSEWENLVRDAMASGVSKKQFREFLDYQK.

As to quaternary structure, homotetramer. Also associates with SinI.

Affects autolysin level and flagellation. In Bacillus licheniformis, this protein is HTH-type transcriptional regulator SinR (sinR).